The following is a 518-amino-acid chain: Nif-specific regulatory protein (518 aa).

Residues 35 to 176 (NTARALAAIL…MVANLISQPL (142 aa)) form the GAF domain. In terms of domain architecture, Sigma-54 factor interaction spans 205-432 (VGKSQAMRQT…LENCLERASV (228 aa)). ATP-binding positions include 232–239 (GESGTGKE) and 295–304 (ADGGTLFLDE). Positions 433–475 (MTDEGLIDRDVILFNHHESPALSVKPGLPLATDESWLDQELDE) are inter-domain linker. The C-terminal DNA-binding domain stretch occupies residues 476–518 (RQRVIAALEKTGWVQAKAARLLGMTPRQIAYRIQIMDINMHRI). A DNA-binding region (H-T-H motif) is located at residues 490 to 509 (QAKAARLLGMTPRQIAYRIQ).

As to quaternary structure, interacts with sigma-54.

Its function is as follows. Required for activation of most nif operons, which are directly involved in nitrogen fixation. The polypeptide is Nif-specific regulatory protein (nifA) (Enterobacter agglomerans (Erwinia herbicola)).